The sequence spans 565 residues: Thiol:disulfide interchange protein DsbD (565 aa).

An N-terminal signal peptide occupies residues 1 to 19; it reads MAQRIFTLILLLCSTSVFA. Disulfide bonds link Cys122/Cys128 and Cys182/Cys304. The next 7 membrane-spanning stretches (helical) occupy residues 163-183, 208-228, 243-263, 289-309, 323-343, 357-377, and 384-404; these read LPFSALWALLIGIGIAFTPCV, LLTFIYVQGMALTYTALGLVV, YVLIGLAIVFTLLAMSMFGLF, GVFIMGAIAGLICSPCTTAPL, WLGGGTLYLYALGMGLPLMLI, WMEQVKTAFGFVILALPVFLL, and IWGLRLWSALGVAFFGWAFIT. Residues 434–565 enclose the Thioredoxin domain; sequence WAFGATHTAQ…FSAHLRDRQP (132 aa). An intrachain disulfide couples Cys480 to Cys483.

The protein belongs to the thioredoxin family. DsbD subfamily.

The protein localises to the cell inner membrane. The enzyme catalyses [protein]-dithiol + NAD(+) = [protein]-disulfide + NADH + H(+). The catalysed reaction is [protein]-dithiol + NADP(+) = [protein]-disulfide + NADPH + H(+). Functionally, required to facilitate the formation of correct disulfide bonds in some periplasmic proteins and for the assembly of the periplasmic c-type cytochromes. Acts by transferring electrons from cytoplasmic thioredoxin to the periplasm. This transfer involves a cascade of disulfide bond formation and reduction steps. The polypeptide is Thiol:disulfide interchange protein DsbD (Escherichia coli O6:H1 (strain CFT073 / ATCC 700928 / UPEC)).